We begin with the raw amino-acid sequence, 247 residues long: Ribonuclease 3 (247 aa).

The RNase III domain maps to 5–147 (LIALQERLQH…LIGAVYLDAG (143 aa)). Glutamate 40 is a Mg(2+) binding site. Residue aspartate 44 is part of the active site. Positions 104-124 (QRRSRRRCADELQPDEAGSGG) are disordered. Aspartate 133 and glutamate 136 together coordinate Mg(2+). Glutamate 136 is a catalytic residue. The region spanning 174-244 (DAKTALQEWL…AAAMLATLKA (71 aa)) is the DRBM domain.

It belongs to the ribonuclease III family. In terms of assembly, homodimer. The cofactor is Mg(2+).

It is found in the cytoplasm. The catalysed reaction is Endonucleolytic cleavage to 5'-phosphomonoester.. Its function is as follows. Digests double-stranded RNA. Involved in the processing of primary rRNA transcript to yield the immediate precursors to the large and small rRNAs (23S and 16S). Processes some mRNAs, and tRNAs when they are encoded in the rRNA operon. Processes pre-crRNA and tracrRNA of type II CRISPR loci if present in the organism. The protein is Ribonuclease 3 of Verminephrobacter eiseniae (strain EF01-2).